The following is a 608-amino-acid chain: Glutamine--fructose-6-phosphate aminotransferase [isomerizing] (608 aa).

Cysteine 2 functions as the Nucleophile; for GATase activity in the catalytic mechanism. Residues 2-217 (CGIVGYSGKK…DKEFVVLTSE (216 aa)) form the Glutamine amidotransferase type-2 domain. SIS domains follow at residues 285–424 (TKEQ…NKNT) and 453–598 (KVQK…VDKP). The active-site For Fru-6P isomerization activity is the lysine 603.

In terms of assembly, homodimer.

The protein localises to the cytoplasm. It catalyses the reaction D-fructose 6-phosphate + L-glutamine = D-glucosamine 6-phosphate + L-glutamate. Catalyzes the first step in hexosamine metabolism, converting fructose-6P into glucosamine-6P using glutamine as a nitrogen source. The sequence is that of Glutamine--fructose-6-phosphate aminotransferase [isomerizing] from Clostridium acetobutylicum (strain ATCC 824 / DSM 792 / JCM 1419 / IAM 19013 / LMG 5710 / NBRC 13948 / NRRL B-527 / VKM B-1787 / 2291 / W).